We begin with the raw amino-acid sequence, 357 residues long: Holliday junction branch migration complex subunit RuvB (357 aa).

The segment at 4-195 is large ATPase domain (RuvB-L); that stretch reads TDKLAAKAVS…FGIVARLEFY (192 aa). Residues Leu-34, Arg-35, Gly-76, Lys-79, Thr-80, Thr-81, 142 to 144, Arg-185, Tyr-195, and Arg-232 each bind ATP; that span reads EDY. Thr-80 contacts Mg(2+). Residues 196-266 are small ATPAse domain (RuvB-S); the sequence is TPTELARIVT…VADAALAMLD (71 aa). A head domain (RuvB-H) region spans residues 269 to 357; that stretch reads AVGFDLMDRK…PARDLWDNNA (89 aa). DNA is bound by residues Arg-305, Arg-324, and Arg-329.

This sequence belongs to the RuvB family. As to quaternary structure, homohexamer. Forms an RuvA(8)-RuvB(12)-Holliday junction (HJ) complex. HJ DNA is sandwiched between 2 RuvA tetramers; dsDNA enters through RuvA and exits via RuvB. An RuvB hexamer assembles on each DNA strand where it exits the tetramer. Each RuvB hexamer is contacted by two RuvA subunits (via domain III) on 2 adjacent RuvB subunits; this complex drives branch migration. In the full resolvosome a probable DNA-RuvA(4)-RuvB(12)-RuvC(2) complex forms which resolves the HJ.

The protein localises to the cytoplasm. The enzyme catalyses ATP + H2O = ADP + phosphate + H(+). In terms of biological role, the RuvA-RuvB-RuvC complex processes Holliday junction (HJ) DNA during genetic recombination and DNA repair, while the RuvA-RuvB complex plays an important role in the rescue of blocked DNA replication forks via replication fork reversal (RFR). RuvA specifically binds to HJ cruciform DNA, conferring on it an open structure. The RuvB hexamer acts as an ATP-dependent pump, pulling dsDNA into and through the RuvAB complex. RuvB forms 2 homohexamers on either side of HJ DNA bound by 1 or 2 RuvA tetramers; 4 subunits per hexamer contact DNA at a time. Coordinated motions by a converter formed by DNA-disengaged RuvB subunits stimulates ATP hydrolysis and nucleotide exchange. Immobilization of the converter enables RuvB to convert the ATP-contained energy into a lever motion, pulling 2 nucleotides of DNA out of the RuvA tetramer per ATP hydrolyzed, thus driving DNA branch migration. The RuvB motors rotate together with the DNA substrate, which together with the progressing nucleotide cycle form the mechanistic basis for DNA recombination by continuous HJ branch migration. Branch migration allows RuvC to scan DNA until it finds its consensus sequence, where it cleaves and resolves cruciform DNA. The protein is Holliday junction branch migration complex subunit RuvB of Ralstonia nicotianae (strain ATCC BAA-1114 / GMI1000) (Ralstonia solanacearum).